We begin with the raw amino-acid sequence, 122 residues long: Protein SPIRAL1-like 3 (122 aa).

2 disordered regions span residues 1–78 and 96–122; these read MGKA…NNYF and KVHAAPGGGSSLDYLFGGPSPAGSGNK. Positions 32–61 are enriched in low complexity; that stretch reads TMGTTTTTTTTTTTDGTGGRPITTTTTTVT. S73 is subject to Phosphoserine.

Belongs to the SPIRAL1 family. As to expression, ubiquitous. Preferentially expressed in above-ground organs.

In terms of biological role, acts redundantly with SPR1 in maintaining the cortical microtubules organization essential for anisotropic cell growth. This Arabidopsis thaliana (Mouse-ear cress) protein is Protein SPIRAL1-like 3 (SP1L3).